Here is a 315-residue protein sequence, read N- to C-terminus: Probable cell division protein WhiA (315 aa).

A DNA-binding region (H-T-H motif) is located at residues 280-313 (SLKELGDLLDPPLSKSGVAYRMRKLEESVKEILQ).

The protein belongs to the WhiA family.

Functionally, involved in cell division and chromosome segregation. This chain is Probable cell division protein WhiA, found in Syntrophomonas wolfei subsp. wolfei (strain DSM 2245B / Goettingen).